Reading from the N-terminus, the 730-residue chain is Polyribonucleotide nucleotidyltransferase (730 aa).

The Mg(2+) site is built by D494 and D500. Residues 561 to 622 form the KH domain; sequence PRIQTIQIDP…EAMNRAIQEI (62 aa). One can recognise an S1 motif domain in the interval 642 to 711; that stretch reads GKIYTGRVTG…RSGKVRLSRK (70 aa).

It belongs to the polyribonucleotide nucleotidyltransferase family. Mg(2+) is required as a cofactor.

It localises to the cytoplasm. The catalysed reaction is RNA(n+1) + phosphate = RNA(n) + a ribonucleoside 5'-diphosphate. Its function is as follows. Involved in mRNA degradation. Catalyzes the phosphorolysis of single-stranded polyribonucleotides processively in the 3'- to 5'-direction. The polypeptide is Polyribonucleotide nucleotidyltransferase (Opitutus terrae (strain DSM 11246 / JCM 15787 / PB90-1)).